A 344-amino-acid chain; its full sequence is Putative [LysW]-lysine/[LysW]-ornithine hydrolase (344 aa).

A Zn(2+)-binding site is contributed by H66. The active site involves D68. Residue D90 participates in Zn(2+) binding. E117 (proton acceptor) is an active-site residue. E118, E139, and H297 together coordinate Zn(2+).

The protein belongs to the peptidase M20A family. LysK subfamily. Zn(2+) serves as cofactor. Requires Co(2+) as cofactor.

The protein resides in the cytoplasm. It catalyses the reaction [amino-group carrier protein]-C-terminal-gamma-(L-lysyl)-L-glutamate + H2O = [amino-group carrier protein]-C-terminal-L-glutamate + L-lysine. The catalysed reaction is [amino-group carrier protein]-C-terminal-gamma-(L-ornithyl)-L-glutamate + H2O = [amino-group carrier protein]-C-terminal-L-glutamate + L-ornithine. It functions in the pathway amino-acid biosynthesis; L-lysine biosynthesis via AAA pathway; L-lysine from L-alpha-aminoadipate (Thermus route): step 5/5. It participates in amino-acid biosynthesis; L-arginine biosynthesis. Its function is as follows. Catalyzes the release of L-lysine from [LysW]-gamma-L-lysine and the release of L-ornithine from [LysW]-L-ornithine. The chain is Putative [LysW]-lysine/[LysW]-ornithine hydrolase from Thermococcus kodakarensis (strain ATCC BAA-918 / JCM 12380 / KOD1) (Pyrococcus kodakaraensis (strain KOD1)).